The sequence spans 336 residues: Tryptophan--tRNA ligase (336 aa).

ATP contacts are provided by residues 11–13 (TTT) and 19–20 (GN). The 'HIGH' region motif lies at 12–20 (TTGIPHLGN). Residue Asp145 coordinates L-tryptophan. ATP is bound by residues 157 to 159 (GRD), Leu196, and 203 to 207 (KMSKS). Residues 203–207 (KMSKS) carry the 'KMSKS' region motif.

Belongs to the class-I aminoacyl-tRNA synthetase family. In terms of assembly, homodimer.

It localises to the cytoplasm. It carries out the reaction tRNA(Trp) + L-tryptophan + ATP = L-tryptophyl-tRNA(Trp) + AMP + diphosphate + H(+). Its function is as follows. Catalyzes the attachment of tryptophan to tRNA(Trp). This is Tryptophan--tRNA ligase from Neisseria meningitidis serogroup A / serotype 4A (strain DSM 15465 / Z2491).